The following is a 250-amino-acid chain: Leucyl/phenylalanyl-tRNA--protein transferase (250 aa).

The interval 1 to 21 is disordered; that stretch reads MTPFRRPTVLGTSASAPFPPA.

Belongs to the L/F-transferase family.

It localises to the cytoplasm. The enzyme catalyses N-terminal L-lysyl-[protein] + L-leucyl-tRNA(Leu) = N-terminal L-leucyl-L-lysyl-[protein] + tRNA(Leu) + H(+). It catalyses the reaction N-terminal L-arginyl-[protein] + L-leucyl-tRNA(Leu) = N-terminal L-leucyl-L-arginyl-[protein] + tRNA(Leu) + H(+). It carries out the reaction L-phenylalanyl-tRNA(Phe) + an N-terminal L-alpha-aminoacyl-[protein] = an N-terminal L-phenylalanyl-L-alpha-aminoacyl-[protein] + tRNA(Phe). Its function is as follows. Functions in the N-end rule pathway of protein degradation where it conjugates Leu, Phe and, less efficiently, Met from aminoacyl-tRNAs to the N-termini of proteins containing an N-terminal arginine or lysine. The sequence is that of Leucyl/phenylalanyl-tRNA--protein transferase from Xanthomonas euvesicatoria pv. vesicatoria (strain 85-10) (Xanthomonas campestris pv. vesicatoria).